A 317-amino-acid chain; its full sequence is Melanocyte-stimulating hormone receptor (317 aa).

At 1 to 37 (MPMQGAQRRLLGSLNSTPTATPNLGLAANHTGAPCLE) the chain is on the extracellular side. N-linked (GlcNAc...) asparagine glycosylation occurs at Asn-29. A helical transmembrane segment spans residues 38–63 (VSIPDGLFLSLGLVSLVENVLVVAAI). Over 64-72 (AKNRNLHSP) the chain is Cytoplasmic. Residues 73–93 (MYCFICCLALSDLLVSGSNML) form a helical membrane-spanning segment. Residues 94–118 (EMAVILLLEAGALATRASVVQQLQN) are Extracellular-facing. The helical transmembrane segment at 119 to 140 (TIDVLTCSSMLCSLCFLGAIAV) threads the bilayer. Over 141–163 (DRYVSIFYALRYHSIVTLPRARR) the chain is Cytoplasmic. A helical transmembrane segment spans residues 164–183 (AIAAIWVASVLSSTLFIAYC). Over 184-191 (DHAAVLLC) the chain is Extracellular. A helical transmembrane segment spans residues 192 to 211 (LVVFFLAMLVLMAVLYVHML). Topologically, residues 212–240 (ARACQHAQGITRLHKRQLPAHQGFGLRGA) are cytoplasmic. A helical membrane pass occupies residues 241-266 (ATLTILLGIFFVCWGPFFLHLMLVVL). The Extracellular portion of the chain corresponds to 267–279 (CPQHLTCSCIFKN). Residues 280-300 (FKVFLTLIICNTIIDPLIYAF) traverse the membrane as a helical segment. Over 301 to 317 (RSQELCRTLKEVLLCSW) the chain is Cytoplasmic. Residue Cys-315 is the site of S-palmitoyl cysteine attachment.

The protein belongs to the G-protein coupled receptor 1 family. Interacts with MGRN1, but does not undergo MGRN1-mediated ubiquitination; this interaction competes with GNAS-binding and thus inhibits agonist-induced cAMP production. Interacts with OPN3; the interaction results in a decrease in MC1R-mediated cAMP signaling and ultimately a decrease in melanin production in melanocytes.

The protein resides in the cell membrane. Its function is as follows. Receptor for MSH (alpha, beta and gamma) and ACTH. The activity of this receptor is mediated by G proteins which activate adenylate cyclase. Mediates melanogenesis, the production of eumelanin (black/brown) and phaeomelanin (red/yellow), via regulation of cAMP signaling in melanocytes. This is Melanocyte-stimulating hormone receptor (MC1R) from Alouatta sara (Bolivian red howler monkey).